Here is a 142-residue protein sequence, read N- to C-terminus: MGGSRRRGSRHKARVRAVEILYEAEVRGVPVSEVIERRRAQTEPPINEFTEQLATRVDEHRARIDELLETYAIGWTLDRMPVVDRNILRIGVYELLWADDIPDGVAIAEAVAMAKELSTDESPVFVNGLLSRLMEKKPSLSL.

It belongs to the NusB family.

In terms of biological role, involved in transcription antitermination. Required for transcription of ribosomal RNA (rRNA) genes. Binds specifically to the boxA antiterminator sequence of the ribosomal RNA (rrn) operons. The protein is Transcription antitermination protein NusB of Thermobifida fusca (strain YX).